The primary structure comprises 95 residues: Embryonic abundant protein 1 (95 aa).

Positions 1-10 (MASGQQQQGR) are enriched in polar residues. The tract at residues 1–95 (MASGQQQQGR…IDESKYKTKS (95 aa)) is disordered. 2 stretches are compositionally biased toward basic and acidic residues: residues 40-64 (AEGR…EMGR) and 75-95 (GGER…KTKS).

This sequence belongs to the small hydrophilic plant seed protein family. Expressed in dry seeds and immature embryos.

In terms of biological role, em protein may act as a cytoplasm protectant during desiccation. The polypeptide is Embryonic abundant protein 1 (EMP1) (Oryza sativa subsp. japonica (Rice)).